Consider the following 342-residue polypeptide: Succinylglutamate desuccinylase (342 aa).

Zn(2+) is bound by residues H64, E67, and H159. E222 is an active-site residue.

The protein belongs to the AspA/AstE family. Succinylglutamate desuccinylase subfamily. It depends on Zn(2+) as a cofactor.

The catalysed reaction is N-succinyl-L-glutamate + H2O = L-glutamate + succinate. It functions in the pathway amino-acid degradation; L-arginine degradation via AST pathway; L-glutamate and succinate from L-arginine: step 5/5. Functionally, transforms N(2)-succinylglutamate into succinate and glutamate. This is Succinylglutamate desuccinylase from Burkholderia orbicola (strain AU 1054).